A 471-amino-acid chain; its full sequence is Ribulose bisphosphate carboxylase large chain 2 (471 aa).

Asn116 and Thr166 together coordinate substrate. Catalysis depends on Lys168, which acts as the Proton acceptor. Residue Lys170 coordinates substrate. Mg(2+) contacts are provided by Lys194, Asp196, and Glu197. Lys194 is subject to N6-carboxylysine. Catalysis depends on His287, which acts as the Proton acceptor. Substrate-binding residues include Arg288, His320, and Ser372.

The protein belongs to the RuBisCO large chain family. Type I subfamily. Heterohexadecamer of 8 large chains and 8 small chains. It depends on Mg(2+) as a cofactor.

It is found in the carboxysome. The enzyme catalyses 2 (2R)-3-phosphoglycerate + 2 H(+) = D-ribulose 1,5-bisphosphate + CO2 + H2O. It carries out the reaction D-ribulose 1,5-bisphosphate + O2 = 2-phosphoglycolate + (2R)-3-phosphoglycerate + 2 H(+). In terms of biological role, ruBisCO catalyzes two reactions: the carboxylation of D-ribulose 1,5-bisphosphate, the primary event in carbon dioxide fixation, as well as the oxidative fragmentation of the pentose substrate. Both reactions occur simultaneously and in competition at the same active site. The protein is Ribulose bisphosphate carboxylase large chain 2 of Hydrogenovibrio marinus.